A 112-amino-acid polypeptide reads, in one-letter code: Large ribosomal subunit protein eL30z (112 aa).

It belongs to the eukaryotic ribosomal protein eL30 family.

The polypeptide is Large ribosomal subunit protein eL30z (RPL30A) (Arabidopsis thaliana (Mouse-ear cress)).